We begin with the raw amino-acid sequence, 304 residues long: Ribosomal RNA large subunit methyltransferase F (304 aa).

The protein belongs to the methyltransferase superfamily. METTL16/RlmF family.

The protein resides in the cytoplasm. The catalysed reaction is adenosine(1618) in 23S rRNA + S-adenosyl-L-methionine = N(6)-methyladenosine(1618) in 23S rRNA + S-adenosyl-L-homocysteine + H(+). Its function is as follows. Specifically methylates the adenine in position 1618 of 23S rRNA. The sequence is that of Ribosomal RNA large subunit methyltransferase F from Klebsiella pneumoniae (strain 342).